The sequence spans 1177 residues: DNA-directed RNA polymerase subunit beta (1177 aa).

The span at aspartate 1147–aspartate 1161 shows a compositional bias: acidic residues. Residues aspartate 1147–glutamate 1177 are disordered. Over residues histidine 1162–glutamate 1177 the composition is skewed to basic and acidic residues.

It belongs to the RNA polymerase beta chain family. In terms of assembly, the RNAP catalytic core consists of 2 alpha, 1 beta, 1 beta' and 1 omega subunit. When a sigma factor is associated with the core the holoenzyme is formed, which can initiate transcription.

It catalyses the reaction RNA(n) + a ribonucleoside 5'-triphosphate = RNA(n+1) + diphosphate. DNA-dependent RNA polymerase catalyzes the transcription of DNA into RNA using the four ribonucleoside triphosphates as substrates. This is DNA-directed RNA polymerase subunit beta from Bacillus anthracis (strain A0248).